A 507-amino-acid polypeptide reads, in one-letter code: Serine/threonine-protein kinase CBK1 (507 aa).

The tract at residues 1-30 (MQKVSGSGKKTTAFQQRKSDSVYNNNEMNK) is disordered. In terms of domain architecture, Protein kinase spans 126 to 431 (FHTVKVIGKG…ANDIKLHPFF (306 aa)). ATP-binding positions include 132-140 (IGKGAFGEV) and Lys-155. Asp-249 (proton acceptor) is an active-site residue. An AGC-kinase C-terminal domain is found at 432-505 (RGVNWDTIRE…KRFDMMTQKG (74 aa)).

The protein belongs to the protein kinase superfamily. STE Ser/Thr protein kinase family. COT1 subfamily.

It carries out the reaction L-seryl-[protein] + ATP = O-phospho-L-seryl-[protein] + ADP + H(+). The catalysed reaction is L-threonyl-[protein] + ATP = O-phospho-L-threonyl-[protein] + ADP + H(+). Functionally, protein kinase that seems to play a role in signaling pathways necessary for cell growth and mating. This Pneumocystis carinii protein is Serine/threonine-protein kinase CBK1 (CBK1).